The primary structure comprises 542 residues: Putative CTP synthase (542 aa).

Residues 1–277 form an amidoligase domain region; that stretch reads MEIDLMKHIQ…HKTILDFFSL (277 aa). Ser-23 is a CTP binding site. A UTP-binding site is contributed by Ser-23. Residues 24 to 29 and Asp-81 contribute to the ATP site; that span reads SLGKGV. Positions 81 and 151 each coordinate Mg(2+). Residues 158–160, 198–203, and Lys-234 each bind CTP; these read DIE and KTKPTQ. UTP is bound by residues 198 to 203 and Lys-234; that span reads KTKPTQ. The 233-residue stretch at 310–542 folds into the Glutamine amidotransferase type-1 domain; the sequence is YVELPDAYKS…LKMSLKIKES (233 aa). Glu-517 is a catalytic residue.

It belongs to the CTP synthase family. As to quaternary structure, homotetramer.

It carries out the reaction UTP + L-glutamine + ATP + H2O = CTP + L-glutamate + ADP + phosphate + 2 H(+). The enzyme catalyses L-glutamine + H2O = L-glutamate + NH4(+). The catalysed reaction is UTP + NH4(+) + ATP = CTP + ADP + phosphate + 2 H(+). The protein operates within pyrimidine metabolism; CTP biosynthesis via de novo pathway; CTP from UDP: step 2/2. Allosterically activated by GTP, when glutamine is the substrate; GTP has no effect on the reaction when ammonia is the substrate. The allosteric effector GTP functions by stabilizing the protein conformation that binds the tetrahedral intermediate(s) formed during glutamine hydrolysis. Inhibited by the product CTP, via allosteric rather than competitive inhibition. Its function is as follows. Catalyzes the ATP-dependent amination of UTP to CTP with either L-glutamine or ammonia as the source of nitrogen. Regulates intracellular CTP levels through interactions with the four ribonucleotide triphosphates. This is Putative CTP synthase from Ureaplasma parvum serovar 3 (strain ATCC 700970).